Reading from the N-terminus, the 605-residue chain is NADH-ubiquinone oxidoreductase chain 5 (605 aa).

15 helical membrane passes run 8-28 (TLLS…YPYT), 34-54 (IYVK…TMIF), 87-107 (MILM…SMWY), 117-137 (FFKY…ANNL), 140-160 (LFIG…WWYG), 171-191 (AILY…WFLF), 241-261 (TPVS…FLLI), 273-293 (IQTM…ICAL), 301-321 (IVAF…GINQ), 324-344 (LAFL…LCSG), 366-386 (LPFT…MPFL), 409-429 (LFIT…IIYF), 457-477 (LLVG…PTTI), 482-502 (MPTY…IVAL), and 584-604 (IKLY…MLNF).

It belongs to the complex I subunit 5 family. Core subunit of respiratory chain NADH dehydrogenase (Complex I) which is composed of 45 different subunits.

The protein localises to the mitochondrion inner membrane. It carries out the reaction a ubiquinone + NADH + 5 H(+)(in) = a ubiquinol + NAD(+) + 4 H(+)(out). In terms of biological role, core subunit of the mitochondrial membrane respiratory chain NADH dehydrogenase (Complex I) which catalyzes electron transfer from NADH through the respiratory chain, using ubiquinone as an electron acceptor. Essential for the catalytic activity and assembly of complex I. The polypeptide is NADH-ubiquinone oxidoreductase chain 5 (MT-ND5) (Rousettus amplexicaudatus (Common rousette)).